The chain runs to 154 residues: Large ribosomal subunit protein uL13 (154 aa).

It belongs to the universal ribosomal protein uL13 family. In terms of assembly, part of the 50S ribosomal subunit.

Its function is as follows. This protein is one of the early assembly proteins of the 50S ribosomal subunit, although it is not seen to bind rRNA by itself. It is important during the early stages of 50S assembly. The polypeptide is Large ribosomal subunit protein uL13 (Agrobacterium fabrum (strain C58 / ATCC 33970) (Agrobacterium tumefaciens (strain C58))).